The sequence spans 333 residues: Probable xyloglucan endotransglucosylase/hydrolase protein 27 (333 aa).

The N-terminal stretch at methionine 1–glycine 20 is a signal peptide. The GH16 domain occupies phenylalanine 21 to phenylalanine 223. The Nucleophile role is filled by glutamate 108. The active-site Proton donor is the glutamate 112. Xyloglucan-binding positions include glutamate 112 and glutamine 125 to asparagine 127. The N-linked (GlcNAc...) asparagine glycan is linked to asparagine 131. Xyloglucan contacts are provided by residues histidine 135 to glutamate 139, lysine 202 to tryptophan 203, glycine 207, and arginine 282. A disulfide bridge links cysteine 277 with cysteine 290. The interval isoleucine 311–isoleucine 333 is disordered. The segment covering proline 312–arginine 324 has biased composition (basic residues).

The protein belongs to the glycosyl hydrolase 16 family. XTH group 3 subfamily. Post-translationally, contains at least one intrachain disulfide bond essential for its enzymatic activity. As to expression, expressed in 7 day old seedlings, roots, hypocotyls, rosette leaves, internodes between nodes bearing axillary shoots, nodes bearing flowers, flower buds, anthers and siliques.

It localises to the secreted. The protein resides in the cell wall. The protein localises to the extracellular space. It is found in the apoplast. It carries out the reaction breaks a beta-(1-&gt;4) bond in the backbone of a xyloglucan and transfers the xyloglucanyl segment on to O-4 of the non-reducing terminal glucose residue of an acceptor, which can be a xyloglucan or an oligosaccharide of xyloglucan.. Its function is as follows. Catalyzes xyloglucan endohydrolysis (XEH) and/or endotransglycosylation (XET). Cleaves and religates xyloglucan polymers, an essential constituent of the primary cell wall, and thereby participates in cell wall construction of growing tissues. Required for cell wall modification during the development of tracheary elements. The chain is Probable xyloglucan endotransglucosylase/hydrolase protein 27 (XTH27) from Arabidopsis thaliana (Mouse-ear cress).